A 335-amino-acid chain; its full sequence is SLAM family member 7 (335 aa).

An N-terminal signal peptide occupies residues 1–22 (MAGSPTCLTLIYILWQLTGSAA). Positions 23-124 (SGPVKELVGS…PSTQEYVLHV (102 aa)) constitute an Ig-like V-type domain. The Extracellular segment spans residues 23–226 (SGPVKELVGS…GAADDPDSSM (204 aa)). 6 N-linked (GlcNAc...) asparagine glycosylation sites follow: Asn-98, Asn-142, Asn-148, Asn-172, Asn-176, and Asn-204. The Ig-like C2-type domain occupies 131-206 (PKVTMGLQSN…ARNPVSRNFS (76 aa)). 2 disulfide bridges follow: Cys-145–Cys-215 and Cys-151–Cys-195. Residues 227–247 (VLLCLLLVPLLLSLFVLGLFL) traverse the membrane as a helical segment. Over 248-335 (WFLKRERQEE…PRLFAYENVI (88 aa)) the chain is Cytoplasmic. The interval 278–296 (SGENTEYDTIPHTNRTILK) is interaction with FYN when phosphorylated at Tyr-284. Positions 302 to 307 (TVYSTV) match the ITSM motif.

As to quaternary structure, isoform 1 binds to SH2D1A when its cytoplasmic tail is phosphorylated in the presence of FYN (in vitro); low affinity binding, the physiological relevance of the interaction is questioned. Interacts with SH2D1B; in NK cells. Interacts (via ITSM phosphorylated on Tyr-302) with SH2D1B, PTPN6/SHP-1, PTPN11/SHP-2, INPP5D/SHIP1, CSK and FYN. Expressed in spleen, lymph node, peripheral blood leukocytes, bone marrow, small intestine, stomach, appendix, lung and trachea. Expression was detected in NK cells, activated B-cells, NK-cell line but not in promyelocytic, B-, or T-cell lines. Expressed in monocytes. Isoform 3 is expressed at much lower level than isoform 1.

It localises to the membrane. Its function is as follows. Self-ligand receptor of the signaling lymphocytic activation molecule (SLAM) family. SLAM receptors triggered by homo- or heterotypic cell-cell interactions are modulating the activation and differentiation of a wide variety of immune cells and thus are involved in the regulation and interconnection of both innate and adaptive immune response. Activities are controlled by presence or absence of small cytoplasmic adapter proteins, SH2D1A/SAP and/or SH2D1B/EAT-2. Isoform 1 mediates NK cell activation through a SH2D1A-independent extracellular signal-regulated ERK-mediated pathway. Positively regulates NK cell functions by a mechanism dependent on phosphorylated SH2D1B. Downstream signaling implicates PLCG1, PLCG2 and PI3K. In addition to heterotypic NK cells-target cells interactions also homotypic interactions between NK cells may contribute to activation. However, in the absence of SH2D1B, inhibits NK cell function. Also acts inhibitory in T-cells. May play a role in lymphocyte adhesion. In LPS-activated monocytes negatively regulates production of pro-inflammatory cytokines. Functionally, isoform 3 does not mediate any NK cell activation. The sequence is that of SLAM family member 7 (SLAMF7) from Homo sapiens (Human).